The chain runs to 89 residues: Small ribosomal subunit protein uS15 (89 aa).

It belongs to the universal ribosomal protein uS15 family. Part of the 30S ribosomal subunit. Forms a bridge to the 50S subunit in the 70S ribosome, contacting the 23S rRNA.

Functionally, one of the primary rRNA binding proteins, it binds directly to 16S rRNA where it helps nucleate assembly of the platform of the 30S subunit by binding and bridging several RNA helices of the 16S rRNA. Forms an intersubunit bridge (bridge B4) with the 23S rRNA of the 50S subunit in the ribosome. This Buchnera aphidicola subsp. Acyrthosiphon pisum (strain 5A) protein is Small ribosomal subunit protein uS15.